Consider the following 829-residue polypeptide: Periplasmic nitrate reductase (829 aa).

Positions 1–27 form a signal peptide, tat-type signal; it reads MNRRDFMKANAVIAAASAAGLALPAGA. A 4Fe-4S Mo/W bis-MGD-type domain is found at 39-95; it reads LEWNKAPCRFCGTGCSVMVATREGKVVATHGDANSEVNRGLSCIKGYFLSKIMYGRD. [4Fe-4S] cluster-binding residues include cysteine 46, cysteine 49, cysteine 53, and cysteine 81. Residues lysine 83, glutamine 150, asparagine 175, cysteine 179, 212–219, 243–247, 262–264, methionine 373, glutamine 377, asparagine 483, 509–510, lysine 532, aspartate 559, and 719–728 contribute to the Mo-bis(molybdopterin guanine dinucleotide) site; these read WGSNMAEM, STFEH, QTD, SD, and TGRVLEHWHS. Tryptophan 795 serves as a coordination point for substrate. The Mo-bis(molybdopterin guanine dinucleotide) site is built by asparagine 803 and lysine 820.

The protein belongs to the prokaryotic molybdopterin-containing oxidoreductase family. NasA/NapA/NarB subfamily. In terms of assembly, component of the periplasmic nitrate reductase NapAB complex composed of NapA and NapB. [4Fe-4S] cluster serves as cofactor. The cofactor is Mo-bis(molybdopterin guanine dinucleotide). Post-translationally, predicted to be exported by the Tat system. The position of the signal peptide cleavage has not been experimentally proven.

It localises to the periplasm. The enzyme catalyses 2 Fe(II)-[cytochrome] + nitrate + 2 H(+) = 2 Fe(III)-[cytochrome] + nitrite + H2O. Functionally, catalytic subunit of the periplasmic nitrate reductase complex NapAB. Receives electrons from NapB and catalyzes the reduction of nitrate to nitrite. In Shewanella denitrificans (strain OS217 / ATCC BAA-1090 / DSM 15013), this protein is Periplasmic nitrate reductase.